A 794-amino-acid chain; its full sequence is ATP-dependent RNA helicase SUPV3L1, mitochondrial (794 aa).

Residues 1–30 (MRRCAWPLLRLSSRVGLALRHGGAVRLRQA) constitute a mitochondrion transit peptide. The Helicase ATP-binding domain occupies 182 to 322 (EARAIQRKII…AIDLVTELMY (141 aa)). 195–202 (GPTNSGKT) contacts ATP. Positions 341 to 506 (VLDYALESLD…GLHPTPEQIE (166 aa)) constitute a Helicase C-terminal domain. Disordered stretches follow at residues 678-741 (EVMS…HGRG) and 764-794 (EWQDQHRSGRYGLASKRNDQSSSKEMGKKKK). Residues 689–704 (TKRDARTVSDHRDAKS) show a composition bias toward basic and acidic residues.

This sequence belongs to the helicase family. Mg(2+) is required as a cofactor. Mn(2+) serves as cofactor.

It localises to the nucleus. Its subcellular location is the mitochondrion matrix. It is found in the mitochondrion nucleoid. The catalysed reaction is ATP + H2O = ADP + phosphate + H(+). Major helicase player in mitochondrial RNA metabolism. Component of the mitochondrial degradosome (mtEXO) complex, that degrades 3' overhang double-stranded RNA with a 3'-to-5' directionality in an ATP-dependent manner. ATPase and ATP-dependent multisubstrate helicase, able to unwind double-stranded (ds) DNA and RNA, and RNA/DNA heteroduplexes in the 5'-to-3' direction. Plays a role in the RNA surveillance system in mitochondria; regulates the stability of mature mRNAs, the removal of aberrantly formed mRNAs and the rapid degradation of non coding processing intermediates. Also implicated in recombination and chromatin maintenance pathways. May protect cells from apoptosis. Associates with mitochondrial DNA. In Gallus gallus (Chicken), this protein is ATP-dependent RNA helicase SUPV3L1, mitochondrial (SUPV3L1).